A 293-amino-acid chain; its full sequence is DDRGK domain-containing protein 1 (293 aa).

Topologically, residues 1–6 (MWGPLI) are lumenal. A helical membrane pass occupies residues 7–27 (YALLGLAIVAAAFLFVRRSQA). Residues 28–293 (KEVVPVADDD…PADVDETTTA (266 aa)) are Cytoplasmic-facing. Disordered regions lie at residues 30 to 151 (VVPV…RQKE) and 273 to 293 (TDVE…TTTA). 2 stretches are compositionally biased toward basic and acidic residues: residues 90–126 (KLQE…KERE) and 133–151 (ERQR…RQKE).

The protein belongs to the DDRGK1 family.

The protein localises to the endoplasmic reticulum membrane. In terms of biological role, substrate adapter for ufmylation, the covalent attachment of the ubiquitin-like modifier UFM1 to substrate proteins. This chain is DDRGK domain-containing protein 1, found in Monosiga brevicollis (Choanoflagellate).